The following is a 636-amino-acid chain: 1-deoxy-D-xylulose-5-phosphate synthase (636 aa).

Thiamine diphosphate is bound by residues His-84 and 125 to 127; that span reads GHS. A Mg(2+)-binding site is contributed by Asp-156. Residues 157 to 158, Asn-185, Phe-292, and Glu-375 each bind thiamine diphosphate; that span reads GA. Asn-185 contributes to the Mg(2+) binding site.

This sequence belongs to the transketolase family. DXPS subfamily. In terms of assembly, homodimer. Requires Mg(2+) as cofactor. The cofactor is thiamine diphosphate.

The catalysed reaction is D-glyceraldehyde 3-phosphate + pyruvate + H(+) = 1-deoxy-D-xylulose 5-phosphate + CO2. Its pathway is metabolic intermediate biosynthesis; 1-deoxy-D-xylulose 5-phosphate biosynthesis; 1-deoxy-D-xylulose 5-phosphate from D-glyceraldehyde 3-phosphate and pyruvate: step 1/1. Its function is as follows. Catalyzes the acyloin condensation reaction between C atoms 2 and 3 of pyruvate and glyceraldehyde 3-phosphate to yield 1-deoxy-D-xylulose-5-phosphate (DXP). The chain is 1-deoxy-D-xylulose-5-phosphate synthase from Cellvibrio japonicus (strain Ueda107) (Pseudomonas fluorescens subsp. cellulosa).